A 285-amino-acid polypeptide reads, in one-letter code: Diaminopimelate epimerase (285 aa).

Residues Asn-14 and Asn-67 each contribute to the substrate site. The active-site Proton donor is the Cys-76. Residues 77-78 (GN), Asn-166, Asn-199, and 217-218 (ER) each bind substrate. Residue Cys-226 is the Proton acceptor of the active site. 227-228 (GT) is a substrate binding site.

The protein belongs to the diaminopimelate epimerase family. In terms of assembly, homodimer.

Its subcellular location is the cytoplasm. The enzyme catalyses (2S,6S)-2,6-diaminopimelate = meso-2,6-diaminopimelate. The protein operates within amino-acid biosynthesis; L-lysine biosynthesis via DAP pathway; DL-2,6-diaminopimelate from LL-2,6-diaminopimelate: step 1/1. Its function is as follows. Catalyzes the stereoinversion of LL-2,6-diaminopimelate (L,L-DAP) to meso-diaminopimelate (meso-DAP), a precursor of L-lysine and an essential component of the bacterial peptidoglycan. The polypeptide is Diaminopimelate epimerase (Bacillus licheniformis (strain ATCC 14580 / DSM 13 / JCM 2505 / CCUG 7422 / NBRC 12200 / NCIMB 9375 / NCTC 10341 / NRRL NRS-1264 / Gibson 46)).